Here is a 243-residue protein sequence, read N- to C-terminus: Small ribosomal subunit protein uS5 (243 aa).

The tract at residues methionine 1–glutamate 54 is disordered. The segment covering alanine 11 to serine 24 has biased composition (polar residues). The span at asparagine 26–glutamate 54 shows a compositional bias: basic and acidic residues. The S5 DRBM domain maps to methionine 57–valine 120.

It belongs to the universal ribosomal protein uS5 family. Part of the 30S ribosomal subunit. Contacts proteins S4 and S8.

With S4 and S12 plays an important role in translational accuracy. Its function is as follows. Located at the back of the 30S subunit body where it stabilizes the conformation of the head with respect to the body. The protein is Small ribosomal subunit protein uS5 of Bifidobacterium animalis subsp. lactis (strain AD011).